Reading from the N-terminus, the 241-residue chain is Glutamate/aspartate import ATP-binding protein GltL (241 aa).

One can recognise an ABC transporter domain in the interval Ile-2–Leu-236. Residue Gly-34–Ser-41 participates in ATP binding.

It belongs to the ABC transporter superfamily. In terms of assembly, the complex is composed of two ATP-binding proteins (GltL), two transmembrane proteins (GltJ and GltK) and a solute-binding protein (GltI).

The protein resides in the cell inner membrane. It catalyses the reaction a polar amino acid(out) + ATP + H2O = a polar amino acid(in) + ADP + phosphate + H(+). The catalysed reaction is L-glutamate(out) + ATP + H2O = L-glutamate(in) + ADP + phosphate + H(+). The enzyme catalyses L-aspartate(out) + ATP + H2O = L-aspartate(in) + ADP + phosphate + H(+). Functionally, part of the ABC transporter complex GltIJKL involved in glutamate and aspartate uptake. Probably responsible for energy coupling to the transport system. In Escherichia coli O157:H7, this protein is Glutamate/aspartate import ATP-binding protein GltL (gltL).